Here is a 230-residue protein sequence, read N- to C-terminus: Ureidoacrylate amidohydrolase RutB (230 aa).

The active-site Proton acceptor is the aspartate 24. Lysine 133 is an active-site residue. Cysteine 166 acts as the Nucleophile in catalysis.

The protein belongs to the isochorismatase family. RutB subfamily.

It carries out the reaction (Z)-3-ureidoacrylate + H2O + H(+) = (Z)-3-aminoacrylate + NH4(+) + CO2. It catalyses the reaction (Z)-3-ureidoacrylate + H2O = (Z)-3-aminoacrylate + carbamate + H(+). The enzyme catalyses (Z)-2-methylureidoacrylate + H2O + H(+) = (Z)-2-methylaminoacrylate + NH4(+) + CO2. Hydrolyzes ureidoacrylate to form aminoacrylate and carbamate. The carbamate hydrolyzes spontaneously, thereby releasing one of the nitrogen atoms of the pyrimidine ring as ammonia and one of its carbon atoms as CO2. The sequence is that of Ureidoacrylate amidohydrolase RutB from Escherichia coli O44:H18 (strain 042 / EAEC).